The chain runs to 578 residues: 2-hydroxyacyl-CoA lyase 1 (578 aa).

The residue at position 4 (Ser4) is a Phosphoserine. Glu60 contacts thiamine diphosphate. Residues Lys351, Lys358, and Lys365 each carry the N6-succinyllysine modification. The segment at 401 to 486 is thiamine pyrophosphate binding; it reads TMDIGRTVLQ…LLVVNNNGIY (86 aa). Asp455 and Asn482 together coordinate Mg(2+). The short motif at 576–578 is the Microbody targeting signal element; that stretch reads SNM.

It belongs to the TPP enzyme family. Homotetramer. The cofactor is Mg(2+). It depends on thiamine diphosphate as a cofactor. As to expression, widely expressed.

The protein localises to the peroxisome. It catalyses the reaction a 2-hydroxy-3-methyl fatty acyl-CoA = a 2-methyl-branched fatty aldehyde + formyl-CoA. It carries out the reaction an (R)-2-hydroxy-long-chain-fatty acyl-CoA = a long-chain fatty aldehyde + formyl-CoA. The catalysed reaction is 2-hydroxy-3-methylhexadecanoyl-CoA = 2-methylpentadecanal + formyl-CoA. The enzyme catalyses 2-hydroxyoctadecanoyl-CoA = heptadecanal + formyl-CoA. It catalyses the reaction 2-hydroxyphytanoyl-CoA = 2,6,10,14-tetramethylpentadecanal + formyl-CoA. Its pathway is lipid metabolism; fatty acid metabolism. Functionally, peroxisomal 2-OH acyl-CoA lyase involved in the cleavage (C1 removal) reaction in the fatty acid alpha-oxydation in a thiamine pyrophosphate (TPP)-dependent manner. Involved in the degradation of 3-methyl-branched fatty acids like phytanic acid and the shortening of 2-hydroxy long-chain fatty acids. Plays a significant role in the biosynthesis of heptadecanal in the liver. This chain is 2-hydroxyacyl-CoA lyase 1, found in Homo sapiens (Human).